We begin with the raw amino-acid sequence, 202 residues long: DNA polymerase III subunit epsilon (202 aa).

Asp23 and Glu25 together coordinate a divalent metal cation. Substrate is bound by residues Asp23 and Glu25. The Proton acceptor role is filled by His162. Asp167 is a binding site for a divalent metal cation. Asp167 is a binding site for substrate.

In terms of assembly, DNA polymerase III contains a core (composed of alpha, epsilon and theta chains) that associates with a tau subunit. This core dimerizes to form the POLIII' complex. PolIII' associates with the gamma complex (composed of gamma, delta, delta', psi and chi chains) and with the beta chain to form the complete DNA polymerase III complex. Requires Mg(2+) as cofactor. Mn(2+) is required as a cofactor.

It catalyses the reaction DNA(n) + a 2'-deoxyribonucleoside 5'-triphosphate = DNA(n+1) + diphosphate. Its function is as follows. DNA polymerase III is a complex, multichain enzyme responsible for most of the replicative synthesis in bacteria. The epsilon subunit contain the editing function and is a proofreading 3'-5' exonuclease. This Aquifex aeolicus (strain VF5) protein is DNA polymerase III subunit epsilon (dnaQ).